Reading from the N-terminus, the 776-residue chain is LPS-assembly protein LptD (776 aa).

An N-terminal signal peptide occupies residues 1-24; that stretch reads MQHFSRTFLAASIATALFAPYAQA.

Belongs to the LptD family. Component of the lipopolysaccharide transport and assembly complex. Interacts with LptE and LptA.

The protein resides in the cell outer membrane. In terms of biological role, together with LptE, is involved in the assembly of lipopolysaccharide (LPS) at the surface of the outer membrane. This is LPS-assembly protein LptD from Vibrio vulnificus (strain YJ016).